A 138-amino-acid chain; its full sequence is Large ribosomal subunit protein uL16 (138 aa).

A compositionally biased stretch (basic residues) spans 1–15 (MLSPKKVKYRKKQRG). Residues 1-21 (MLSPKKVKYRKKQRGRLSGEA) form a disordered region.

It belongs to the universal ribosomal protein uL16 family. In terms of assembly, part of the 50S ribosomal subunit.

Its function is as follows. Binds 23S rRNA and is also seen to make contacts with the A and possibly P site tRNAs. This Borreliella burgdorferi (strain ATCC 35210 / DSM 4680 / CIP 102532 / B31) (Borrelia burgdorferi) protein is Large ribosomal subunit protein uL16.